A 698-amino-acid polypeptide reads, in one-letter code: MNKLDISTINIEQLTSDHAKKIVDFLALELQKYDQAYYSDNNPLVTDAQYDVLKNLNNKIVAKFPHLALVNDHSKKVGFTPSAQFSKVVHLKPMLSLANGFCVEDISNFITKIQNFLKIDHCPKIVCEYKIDGLSFNARYEYGVLTLASTRGDGQIGENITENLKTIQSFPQTLPITDKVFEVRGEIYITNNDFRVLNIQQQKLGKALFSNPRNAAAGSIRQLDPAITAQRPLKYFVYALGEVTNHHFASTQFELLQKLSQLKFSVNTDYILSDNLHSMIEFYNNVATERNNLAFEIDGVVYKVNDFALQERLGATSTSPRFAIAYKFPALIGRTKITNITLQVGKTGAVTPVALLIPINIAGVTISRATLHNKQEIESKDIRIGDYVFLHRAGDVIPKINGVDLSARDAQSSTRFIFPATCPSCNQNLVVNEGETVARCGNSLACPAQIYERICHFVSKDALNIDGLGRQRIRFLLDNKYIVNIVDIFLLEENNKLLSSNKLEDIAGWGIKSVNKLFKNINQAKNVILDRFIYALAVKHVGKYSAKLLAKEFKTAKNFIDQSLKLANNVTEIYEKLCNIEGLGVKTADQLKQFFMVSANVNLITKLVNILTIQDWQYHGDNLLLSNQTIVFTGTFATVSRSEIKVQAEKLGAKVGTQVSNNTDLLVVGNKAGNKLQKAQQLGIKIINEEEWIKMVNE.

NAD(+) contacts are provided by residues 47–51 (DAQYD), 96–97 (SL), and glutamate 128. Lysine 130 acts as the N6-AMP-lysine intermediate in catalysis. NAD(+) is bound by residues arginine 151, glutamate 186, lysine 303, and lysine 327. Zn(2+) is bound by residues cysteine 422, cysteine 425, cysteine 440, and cysteine 446. The BRCT domain occupies 620–698 (GDNLLLSNQT…EEEWIKMVNE (79 aa)).

It belongs to the NAD-dependent DNA ligase family. LigA subfamily. Mg(2+) serves as cofactor. The cofactor is Mn(2+).

The enzyme catalyses NAD(+) + (deoxyribonucleotide)n-3'-hydroxyl + 5'-phospho-(deoxyribonucleotide)m = (deoxyribonucleotide)n+m + AMP + beta-nicotinamide D-nucleotide.. In terms of biological role, DNA ligase that catalyzes the formation of phosphodiester linkages between 5'-phosphoryl and 3'-hydroxyl groups in double-stranded DNA using NAD as a coenzyme and as the energy source for the reaction. It is essential for DNA replication and repair of damaged DNA. The polypeptide is DNA ligase (Orientia tsutsugamushi (strain Boryong) (Rickettsia tsutsugamushi)).